The sequence spans 300 residues: E3 ubiquitin-protein ligase RNF212B (300 aa).

The RING-type zinc finger occupies 6–40 (CNQCFRKDGAHFFVTSCGHIFCKKCVTLEKCAVCG). A coiled-coil region spans residues 87 to 124 (LLIAFYKHRITKLETAMQEAQQALVSQDKELSVLRKEN). The segment at 141–232 (YQGSRSITPR…SYRTSSASSG (92 aa)) is disordered. Polar residues predominate over residues 155–165 (TSPSQSVTPRP). Over residues 166–182 (SFQHSSQVVSRSSSAES) the composition is skewed to low complexity. Positions 191–200 (GSLGQGGRGL) are enriched in gly residues. The segment covering 211-232 (NETPSPASTHSLSYRTSSASSG) has biased composition (polar residues).

As to quaternary structure, homodimer. Post-translationally, autoubiquitinated.

It localises to the chromosome. The catalysed reaction is S-ubiquitinyl-[E2 ubiquitin-conjugating enzyme]-L-cysteine + [acceptor protein]-L-lysine = [E2 ubiquitin-conjugating enzyme]-L-cysteine + N(6)-ubiquitinyl-[acceptor protein]-L-lysine.. It participates in protein modification; protein ubiquitination. In terms of biological role, ubiquitin E3 ligase that acts as a crucial factor for crossing-over (CO) formation during meiosis. Essential for normal prophase I progression and for ensuring appropriate CO designation in meiosis. Recruits key components of the cross-over machinery either directly ou indirectly, leading to the activation of the MutL-gamma complex. The function of RNF212B in CO designation is dependent on its catalytic activity. The chain is E3 ubiquitin-protein ligase RNF212B (RNF212B) from Homo sapiens (Human).